Reading from the N-terminus, the 392-residue chain is DNA-directed RNA polymerase subunit Rpo1C (392 aa).

Belongs to the RNA polymerase beta' chain family. In terms of assembly, part of the 13-subunit RNA polymerase complex.

The protein resides in the cytoplasm. It carries out the reaction RNA(n) + a ribonucleoside 5'-triphosphate = RNA(n+1) + diphosphate. Functionally, DNA-dependent RNA polymerase (RNAP) catalyzes the transcription of DNA into RNA using the four ribonucleoside triphosphates as substrates. Forms part of the jaw domain. The polypeptide is DNA-directed RNA polymerase subunit Rpo1C (Saccharolobus solfataricus (strain ATCC 35092 / DSM 1617 / JCM 11322 / P2) (Sulfolobus solfataricus)).